Consider the following 657-residue polypeptide: uncharacterized protein (657 aa).

The first 17 residues, 1 to 17, serve as a signal peptide directing secretion; that stretch reads MACVLACVAVLIGAASA.

This is an uncharacterized protein from Orgyia pseudotsugata (Douglas-fir tussock moth).